Consider the following 129-residue polypeptide: Phosphoribosyl-AMP cyclohydrolase (129 aa).

D76 serves as a coordination point for Mg(2+). C77 contributes to the Zn(2+) binding site. Residues D78 and D80 each contribute to the Mg(2+) site. Positions 97 and 104 each coordinate Zn(2+).

This sequence belongs to the PRA-CH family. Homodimer. It depends on Mg(2+) as a cofactor. Requires Zn(2+) as cofactor.

It localises to the cytoplasm. The catalysed reaction is 1-(5-phospho-beta-D-ribosyl)-5'-AMP + H2O = 1-(5-phospho-beta-D-ribosyl)-5-[(5-phospho-beta-D-ribosylamino)methylideneamino]imidazole-4-carboxamide. It functions in the pathway amino-acid biosynthesis; L-histidine biosynthesis; L-histidine from 5-phospho-alpha-D-ribose 1-diphosphate: step 3/9. Its function is as follows. Catalyzes the hydrolysis of the adenine ring of phosphoribosyl-AMP. The chain is Phosphoribosyl-AMP cyclohydrolase from Methylibium petroleiphilum (strain ATCC BAA-1232 / LMG 22953 / PM1).